Here is a 232-residue protein sequence, read N- to C-terminus: Large ribosomal subunit protein uL1 (232 aa).

This sequence belongs to the universal ribosomal protein uL1 family. As to quaternary structure, part of the 50S ribosomal subunit.

Its function is as follows. Binds directly to 23S rRNA. The L1 stalk is quite mobile in the ribosome, and is involved in E site tRNA release. In terms of biological role, protein L1 is also a translational repressor protein, it controls the translation of the L11 operon by binding to its mRNA. In Paraburkholderia phymatum (strain DSM 17167 / CIP 108236 / LMG 21445 / STM815) (Burkholderia phymatum), this protein is Large ribosomal subunit protein uL1.